The primary structure comprises 299 residues: Kruppel-like factor 2 (299 aa).

Disordered regions lie at residues Tyr-19 to His-38 and Tyr-146 to Lys-189. Over residues His-23 to His-38 the composition is skewed to basic residues. Over residues Ser-153 to Lys-180 the composition is skewed to basic and acidic residues. 3 consecutive C2H2-type zinc fingers follow at residues His-198–His-222, Tyr-228–His-252, and Phe-258–His-280.

Belongs to the krueppel C2H2-type zinc-finger protein family. In terms of tissue distribution, expressed predominantly in intestine.

The protein resides in the nucleus. Its function is as follows. Probable transcription factor which regulates lipid metabolism. The protein is Kruppel-like factor 2 of Caenorhabditis elegans.